Consider the following 121-residue polypeptide: Holo-[acyl-carrier-protein] synthase (121 aa).

The Mg(2+) site is built by Asp8 and Glu58.

This sequence belongs to the P-Pant transferase superfamily. AcpS family. Homotrimer. It depends on Mg(2+) as a cofactor.

It localises to the cytoplasm. The enzyme catalyses apo-[ACP] + CoA = holo-[ACP] + adenosine 3',5'-bisphosphate + H(+). Its function is as follows. Transfers the 4'-phosphopantetheine moiety from coenzyme A to a Ser of fatty acid acyl-carrier-protein ACP. Also modifies the D-alanyl carrier protein but fails to recognize PCP and AcpK, an acyl carrier protein of secondary metabolism. This is Holo-[acyl-carrier-protein] synthase from Bacillus subtilis (strain 168).